The following is a 313-amino-acid chain: Ribosomal RNA small subunit methyltransferase H (313 aa).

S-adenosyl-L-methionine-binding positions include 31–33 (GGH), Asp51, Phe77, Asp95, and Gln102.

This sequence belongs to the methyltransferase superfamily. RsmH family.

It localises to the cytoplasm. The catalysed reaction is cytidine(1402) in 16S rRNA + S-adenosyl-L-methionine = N(4)-methylcytidine(1402) in 16S rRNA + S-adenosyl-L-homocysteine + H(+). Functionally, specifically methylates the N4 position of cytidine in position 1402 (C1402) of 16S rRNA. The protein is Ribosomal RNA small subunit methyltransferase H of Xylella fastidiosa (strain M23).